Here is a 460-residue protein sequence, read N- to C-terminus: Orexin receptor type 2 (460 aa).

The Extracellular segment spans residues 1-54 (MSSTKLEDSLPRRNWSSASELNETQEPFLNPTDYDDEEFLRYLWREYLHPKEYE). Residues N14 and N22 are each glycosylated (N-linked (GlcNAc...) asparagine). A required for response to orexin-A region spans residues 33–49 (DYDDEEFLRYLWREYLH). The chain crosses the membrane as a helical span at residues 55–75 (WVLIAGYIIVFVVALIGNVLV). Residues 76–88 (CVAVWKNHHMRTV) are Cytoplasmic-facing. Residues 89-110 (TNYFIVNLSLADVLVTITCLPA) traverse the membrane as a helical segment. Topologically, residues 111–127 (TLVVDITETWFFGQSLC) are extracellular. Cysteines 127 and 210 form a disulfide. A helical transmembrane segment spans residues 128–150 (KVIPYLQTVSVSVSVLTLSCIAL). Residues 151-170 (DRWYAICHPLMFKSTAKRAR) are Cytoplasmic-facing. A helical membrane pass occupies residues 171–191 (NSIVVIWIVSCIIMIPQAIVM). Over 192–222 (ERSSMLPGLANKTTLFTVCDERWGGEVYPKM) the chain is Extracellular. N-linked (GlcNAc...) asparagine glycosylation is present at N202. The chain crosses the membrane as a helical span at residues 223–243 (YHICFFLVTYMAPLCLMVLAY). Topologically, residues 244-304 (LQIFRKLWCR…QIRARRKTAR (61 aa)) are cytoplasmic. The helical transmembrane segment at 305–326 (MLMVVLLVFAICYLPISILNVL) threads the bilayer. Residues 327-342 (KRVFGMFTHTEDRETV) lie on the Extracellular side of the membrane. Residues 343–366 (YAWFTFSHWLVYANSAANPIIYNF) form a helical membrane-spanning segment. Topologically, residues 367–460 (LSGKFREEFK…SSLLSTWLEV (94 aa)) are cytoplasmic.

The protein belongs to the G-protein coupled receptor 1 family. In terms of tissue distribution, expressed in the brain in the cerebral cortex, septal nuclei, hippocampus, medial thalamic groups, dorsal and median raphe nuclei, and many hypothalamic nuclei including the tuberomammillary nucleus, dorsomedial hypothalamus, paraventricular hypothalamic nucleus, and ventral premammillary nucleus. Not detected in the spleen, lung, liver, skeletal muscle, kidney and testis. Orexin receptor mRNA expression has also been reported in the adrenal gland, enteric nervous system, and pancreas.

The protein resides in the cell membrane. Functionally, nonselective, high-affinity receptor for both orexin-A and orexin-B neuropeptides. Triggers an increase in cytoplasmic Ca(2+) levels in response to orexin-A binding. The sequence is that of Orexin receptor type 2 (Hcrtr2) from Rattus norvegicus (Rat).